A 135-amino-acid chain; its full sequence is Small ribosomal subunit protein uS8 (135 aa).

The protein belongs to the universal ribosomal protein uS8 family. Part of the 30S ribosomal subunit. Contacts proteins S5 and S12.

Functionally, one of the primary rRNA binding proteins, it binds directly to 16S rRNA central domain where it helps coordinate assembly of the platform of the 30S subunit. This is Small ribosomal subunit protein uS8 from Corynebacterium urealyticum (strain ATCC 43042 / DSM 7109).